A 208-amino-acid chain; its full sequence is GTP cyclohydrolase-2 (208 aa).

Arg49 to Glu53 is a binding site for GTP. Positions 54, 65, and 67 each coordinate Zn(2+). GTP contacts are provided by residues Gln70, Glu92–Arg94, and Thr114. The active-site Proton acceptor is Asp126. Residue Arg128 is the Nucleophile of the active site. 2 residues coordinate GTP: Thr149 and Lys154.

This sequence belongs to the GTP cyclohydrolase II family. It depends on Zn(2+) as a cofactor.

The enzyme catalyses GTP + 4 H2O = 2,5-diamino-6-hydroxy-4-(5-phosphoribosylamino)-pyrimidine + formate + 2 phosphate + 3 H(+). It participates in cofactor biosynthesis; riboflavin biosynthesis; 5-amino-6-(D-ribitylamino)uracil from GTP: step 1/4. Catalyzes the conversion of GTP to 2,5-diamino-6-ribosylamino-4(3H)-pyrimidinone 5'-phosphate (DARP), formate and pyrophosphate. The chain is GTP cyclohydrolase-2 from Azotobacter vinelandii (strain DJ / ATCC BAA-1303).